The chain runs to 440 residues: Thymidine phosphorylase (440 aa).

The protein belongs to the thymidine/pyrimidine-nucleoside phosphorylase family. As to quaternary structure, homodimer.

The enzyme catalyses thymidine + phosphate = 2-deoxy-alpha-D-ribose 1-phosphate + thymine. It participates in pyrimidine metabolism; dTMP biosynthesis via salvage pathway; dTMP from thymine: step 1/2. The enzymes which catalyze the reversible phosphorolysis of pyrimidine nucleosides are involved in the degradation of these compounds and in their utilization as carbon and energy sources, or in the rescue of pyrimidine bases for nucleotide synthesis. The chain is Thymidine phosphorylase from Escherichia coli O127:H6 (strain E2348/69 / EPEC).